Reading from the N-terminus, the 68-residue chain is MKRQKRDHTSRAFTRGYQAGVEGRSRSLCPHSTGEIKQSWLTGWREGREDHWNGFNTLAQVQRISNIS.

It belongs to the ribosome modulation factor family.

It localises to the cytoplasm. Its function is as follows. During stationary phase, converts 70S ribosomes to an inactive dimeric form (100S ribosomes). The sequence is that of Ribosome modulation factor from Saccharophagus degradans (strain 2-40 / ATCC 43961 / DSM 17024).